We begin with the raw amino-acid sequence, 266 residues long: Small ribosomal subunit protein uS3 (266 aa).

Residues 39–107 (VREYLKKKLK…PVHVNIEEIR (69 aa)) enclose the KH type-2 domain. A disordered region spans residues 218–266 (EVAEDKRPRRNARPGDRRPRRDGEGGAPGARRGAPRRGAGKPEDGKTGE). Composition is skewed to basic and acidic residues over residues 230–241 (RPGDRRPRRDGE) and 257–266 (GKPEDGKTGE).

It belongs to the universal ribosomal protein uS3 family. Part of the 30S ribosomal subunit. Forms a tight complex with proteins S10 and S14.

Its function is as follows. Binds the lower part of the 30S subunit head. Binds mRNA in the 70S ribosome, positioning it for translation. This Burkholderia ambifaria (strain MC40-6) protein is Small ribosomal subunit protein uS3.